Reading from the N-terminus, the 409-residue chain is Putative competence-damage inducible protein (409 aa).

The protein belongs to the CinA family.

This chain is Putative competence-damage inducible protein, found in Clostridium botulinum (strain ATCC 19397 / Type A).